A 260-amino-acid polypeptide reads, in one-letter code: Hydroxyethylthiazole kinase 1 (260 aa).

Residue Met39 participates in substrate binding. The ATP site is built by Arg115 and Thr160. Gly187 is a binding site for substrate.

The protein belongs to the Thz kinase family. Requires Mg(2+) as cofactor.

It catalyses the reaction 5-(2-hydroxyethyl)-4-methylthiazole + ATP = 4-methyl-5-(2-phosphooxyethyl)-thiazole + ADP + H(+). It functions in the pathway cofactor biosynthesis; thiamine diphosphate biosynthesis; 4-methyl-5-(2-phosphoethyl)-thiazole from 5-(2-hydroxyethyl)-4-methylthiazole: step 1/1. Functionally, catalyzes the phosphorylation of the hydroxyl group of 4-methyl-5-beta-hydroxyethylthiazole (THZ). This Streptococcus pneumoniae serotype 2 (strain D39 / NCTC 7466) protein is Hydroxyethylthiazole kinase 1.